A 460-amino-acid chain; its full sequence is NADH-ubiquinone oxidoreductase chain 4 (460 aa).

13 helical membrane-spanning segments follow: residues 20–42 (AKWL…LSWL), 61–81 (PLST…VLAS), 94–113 (RTYI…AFGA), 117–139 (IMFY…RWGN), 148–168 (TYFL…LLLL), 195–215 (LWWA…GVHL), 225–245 (PIAG…YGMM), 258–278 (LAYP…SICL), 285–304 (SLIA…GILI), 308–330 (WGFT…LFCL), 351–371 (MILP…LALP), 394–414 (LLLT…LFLM), and 436–456 (LLIT…ELMW).

It belongs to the complex I subunit 4 family.

It is found in the mitochondrion membrane. The catalysed reaction is a ubiquinone + NADH + 5 H(+)(in) = a ubiquinol + NAD(+) + 4 H(+)(out). Functionally, core subunit of the mitochondrial membrane respiratory chain NADH dehydrogenase (Complex I) that is believed to belong to the minimal assembly required for catalysis. Complex I functions in the transfer of electrons from NADH to the respiratory chain. The immediate electron acceptor for the enzyme is believed to be ubiquinone. The protein is NADH-ubiquinone oxidoreductase chain 4 (MT-ND4) of Salmo salar (Atlantic salmon).